Here is a 348-residue protein sequence, read N- to C-terminus: UPF0283 membrane protein HAPS_0079 (348 aa).

A run of 3 helical transmembrane segments spans residues 57–77 (FLAALALFGIATIAQSVQWLI), 86–106 (IYFAFAVAFFGISLAGVGAII), and 203–223 (ENAIIVAVSPLALVDILMVAW).

This sequence belongs to the UPF0283 family.

It localises to the cell inner membrane. In Glaesserella parasuis serovar 5 (strain SH0165) (Haemophilus parasuis), this protein is UPF0283 membrane protein HAPS_0079.